Consider the following 500-residue polypeptide: Lysine--tRNA ligase (500 aa).

Mg(2+)-binding residues include Glu-407 and Glu-414.

Belongs to the class-II aminoacyl-tRNA synthetase family. In terms of assembly, homodimer. Requires Mg(2+) as cofactor.

Its subcellular location is the cytoplasm. It carries out the reaction tRNA(Lys) + L-lysine + ATP = L-lysyl-tRNA(Lys) + AMP + diphosphate. This Azobacteroides pseudotrichonymphae genomovar. CFP2 protein is Lysine--tRNA ligase.